A 200-amino-acid chain; its full sequence is ATP-dependent Clp protease proteolytic subunit 2 (200 aa).

The Nucleophile role is filled by Ser-99. Residue His-124 is part of the active site.

It belongs to the peptidase S14 family. Fourteen ClpP subunits assemble into 2 heptameric rings which stack back to back to give a disk-like structure with a central cavity, resembling the structure of eukaryotic proteasomes.

It localises to the cytoplasm. The enzyme catalyses Hydrolysis of proteins to small peptides in the presence of ATP and magnesium. alpha-casein is the usual test substrate. In the absence of ATP, only oligopeptides shorter than five residues are hydrolyzed (such as succinyl-Leu-Tyr-|-NHMec, and Leu-Tyr-Leu-|-Tyr-Trp, in which cleavage of the -Tyr-|-Leu- and -Tyr-|-Trp bonds also occurs).. Cleaves peptides in various proteins in a process that requires ATP hydrolysis. Has a chymotrypsin-like activity. Plays a major role in the degradation of misfolded proteins. This chain is ATP-dependent Clp protease proteolytic subunit 2, found in Treponema denticola (strain ATCC 35405 / DSM 14222 / CIP 103919 / JCM 8153 / KCTC 15104).